Consider the following 388-residue polypeptide: Alcohol dehydrogenase patD (388 aa).

C46 provides a ligand contact to Zn(2+). H47 lines the NAD(+) pocket. Positions 67, 68, 101, 104, and 112 each coordinate Zn(2+). Residue H67 coordinates substrate. Residues 198–203 (VALSRG), 295–297 (SLL), and 320–322 (EEA) each bind NAD(+).

The protein belongs to the zinc-containing alcohol dehydrogenase family. The cofactor is Zn(2+).

Its subcellular location is the cytoplasm. The protein resides in the cytosol. It carries out the reaction neopatulin + NADPH + H(+) = (E)-ascladiol + NADP(+). The protein operates within mycotoxin biosynthesis; patulin biosynthesis. In terms of biological role, alcohol dehydrogenase; part of the gene cluster that mediates the biosynthesis of patulin, an acetate-derived tetraketide mycotoxin produced by several fungal species that shows antimicrobial properties against several bacteria. PatD catalyzes the conversion of neopatulin into E-ascladiol. The pathway begins with the synthesis of 6-methylsalicylic acid by the polyketide synthase (PKS) patK via condensation of acetate and malonate units. The 6-methylsalicylic acid decarboxylase patG then catalyzes the decarboxylation of 6-methylsalicylic acid to yield m-cresol (also known as 3-methylphenol). These first reactions occur in the cytosol. The intermediate m-cresol is then transported into the endoplasmic reticulum where the cytochrome P450 monooxygenase patH converts it to m-hydroxybenzyl alcohol, which is further converted to gentisyl alcohol by the cytochrome P450 monooxygenase patI. The oxidoreductases patJ and patO further convert gentisyl alcohol to isoepoxydon in the vacuole. PatN catalyzes then the transformation of isoepoxydon into phyllostine. The cluster protein patF is responsible for the conversion from phyllostine to neopatulin whereas the alcohol dehydrogenase patD converts neopatulin to E-ascladiol. The steps between isoepoxydon and E-ascladiol occur in the cytosol, and E-ascladiol is probably secreted to the extracellular space by one of the cluster-specific transporters patC or patM. Finally, the secreted patulin synthase patE catalyzes the conversion of E-ascladiol to patulin. This chain is Alcohol dehydrogenase patD, found in Aspergillus clavatus (strain ATCC 1007 / CBS 513.65 / DSM 816 / NCTC 3887 / NRRL 1 / QM 1276 / 107).